A 144-amino-acid polypeptide reads, in one-letter code: ATP synthase epsilon chain (144 aa).

It belongs to the ATPase epsilon chain family. As to quaternary structure, F-type ATPases have 2 components, CF(1) - the catalytic core - and CF(0) - the membrane proton channel. CF(1) has five subunits: alpha(3), beta(3), gamma(1), delta(1), epsilon(1). CF(0) has three main subunits: a, b and c.

The protein resides in the cell inner membrane. Its function is as follows. Produces ATP from ADP in the presence of a proton gradient across the membrane. This is ATP synthase epsilon chain from Hydrogenovibrio crunogenus (strain DSM 25203 / XCL-2) (Thiomicrospira crunogena).